The chain runs to 210 residues: Putative 3-methyladenine DNA glycosylase (210 aa).

The protein belongs to the DNA glycosylase MPG family.

The protein is Putative 3-methyladenine DNA glycosylase of Lactobacillus acidophilus (strain ATCC 700396 / NCK56 / N2 / NCFM).